The sequence spans 208 residues: Protein-L-isoaspartate O-methyltransferase (208 aa).

Ser59 is a catalytic residue.

Belongs to the methyltransferase superfamily. L-isoaspartyl/D-aspartyl protein methyltransferase family.

The protein resides in the cytoplasm. The enzyme catalyses [protein]-L-isoaspartate + S-adenosyl-L-methionine = [protein]-L-isoaspartate alpha-methyl ester + S-adenosyl-L-homocysteine. Catalyzes the methyl esterification of L-isoaspartyl residues in peptides and proteins that result from spontaneous decomposition of normal L-aspartyl and L-asparaginyl residues. It plays a role in the repair and/or degradation of damaged proteins. The protein is Protein-L-isoaspartate O-methyltransferase of Escherichia coli O7:K1 (strain IAI39 / ExPEC).